The sequence spans 257 residues: Ribosome-recycling factor, mitochondrial (257 aa).

Belongs to the RRF family.

It is found in the mitochondrion. Necessary for protein synthesis in mitochondria. Functions as a ribosome recycling factor in mitochondria. This Debaryomyces hansenii (strain ATCC 36239 / CBS 767 / BCRC 21394 / JCM 1990 / NBRC 0083 / IGC 2968) (Yeast) protein is Ribosome-recycling factor, mitochondrial (RRF1).